The sequence spans 146 residues: Large ribosomal subunit protein uL15 (146 aa).

Residues 1-13 are compositionally biased toward basic and acidic residues; it reads MKLNELKPNEGSR. The interval 1–54 is disordered; it reads MKLNELKPNEGSRRNRKRVGRGTSSGYGKTAGRGQKGQLARTGGKTRLGFEGGQ. Residues 23–35 show a composition bias toward gly residues; the sequence is TSSGYGKTAGRGQ.

This sequence belongs to the universal ribosomal protein uL15 family. As to quaternary structure, part of the 50S ribosomal subunit.

Its function is as follows. Binds to the 23S rRNA. This is Large ribosomal subunit protein uL15 from Lactobacillus johnsonii (strain CNCM I-12250 / La1 / NCC 533).